The chain runs to 122 residues: Large ribosomal subunit protein bL12 (122 aa).

It belongs to the bacterial ribosomal protein bL12 family. As to quaternary structure, homodimer. Part of the ribosomal stalk of the 50S ribosomal subunit. Forms a multimeric L10(L12)X complex, where L10 forms an elongated spine to which 2 to 4 L12 dimers bind in a sequential fashion. Binds GTP-bound translation factors.

In terms of biological role, forms part of the ribosomal stalk which helps the ribosome interact with GTP-bound translation factors. Is thus essential for accurate translation. In Sulfurimonas denitrificans (strain ATCC 33889 / DSM 1251) (Thiomicrospira denitrificans (strain ATCC 33889 / DSM 1251)), this protein is Large ribosomal subunit protein bL12.